The chain runs to 470 residues: SHUGOSHIN 2 (470 aa).

The stretch at Ile-72–Glu-113 forms a coiled coil. Composition is skewed to basic and acidic residues over residues Val-131–Val-143 and Gly-150–His-162. 2 disordered regions span residues Val-131–Ser-176 and Glu-358–Cys-470. Basic residues predominate over residues Lys-163–Arg-172. Positions Ser-370–Arg-381 are enriched in basic and acidic residues. Positions Lys-382–Thr-392 are enriched in basic residues. Composition is skewed to basic and acidic residues over residues Ser-396–Ala-406, Thr-423–Thr-438, and His-449–Leu-462.

The protein belongs to the shugoshin family.

Its function is as follows. Dispensable for both meiotic and mitotic cell cycle progression. Required with SGO1 for full protection of centromeric cohesion during anaphase I. Required to prevent precocious release of pericentromeric cohesins during meiosis. Acts redundantly to SGO1. The polypeptide is SHUGOSHIN 2 (Arabidopsis thaliana (Mouse-ear cress)).